The chain runs to 410 residues: Protein TIC 214 (410 aa).

The next 6 membrane-spanning stretches (helical) occupy residues 22–42 (FVFG…GSFI), 61–81 (GSAI…IGVI), 87–107 (LEPS…IGFL), 131–151 (AVIV…ITSI), 161–181 (LFLF…GFLI), and 210–230 (LALC…YIGL).

This sequence belongs to the TIC214 family. In terms of assembly, part of the Tic complex.

It localises to the plastid. The protein localises to the chloroplast inner membrane. Its function is as follows. Involved in protein precursor import into chloroplasts. May be part of an intermediate translocation complex acting as a protein-conducting channel at the inner envelope. This Mesostigma viride (Green alga) protein is Protein TIC 214.